Here is a 229-residue protein sequence, read N- to C-terminus: Lipoprotein-releasing system ATP-binding protein LolD (229 aa).

The ABC transporter domain maps to 7-229 (LKCKNVTKTY…KNGKLYKKNL (223 aa)). 43–50 (GDSGSGKS) is an ATP binding site.

The protein belongs to the ABC transporter superfamily. Lipoprotein translocase (TC 3.A.1.125) family. As to quaternary structure, the complex is composed of two ATP-binding proteins (LolD) and two transmembrane proteins (LolC and LolE).

The protein resides in the cell membrane. Functionally, part of the ABC transporter complex LolCDE involved in the translocation of lipoproteins, in an ATP-dependent manner. The sequence is that of Lipoprotein-releasing system ATP-binding protein LolD from Wigglesworthia glossinidia brevipalpis.